Reading from the N-terminus, the 197-residue chain is Ribonuclease HII (197 aa).

The 187-residue stretch at 11-197 (GRIAGVDEVG…FGPVKRVLGL (187 aa)) folds into the RNase H type-2 domain. The a divalent metal cation site is built by D17, E18, and D109.

The protein belongs to the RNase HII family. It depends on Mn(2+) as a cofactor. Mg(2+) serves as cofactor.

It is found in the cytoplasm. It catalyses the reaction Endonucleolytic cleavage to 5'-phosphomonoester.. Functionally, endonuclease that specifically degrades the RNA of RNA-DNA hybrids. This is Ribonuclease HII from Edwardsiella ictaluri (strain 93-146).